A 338-amino-acid polypeptide reads, in one-letter code: Serpentine receptor class alpha-32 (338 aa).

Helical transmembrane passes span 30 to 50 (VYVIYIDLVLILALFLSIHAI), 63 to 83 (ITHLLIASLVYGNVHNASYTI), 120 to 140 (RFLFIAIELALNVDRIIVILF), 152 to 172 (GEILNILAVILSFALGCLLHL), 199 to 219 (LTSYTILSACCAALDFLMMWY), 249 to 269 (LNSLLQLFVTSIYAISMFVLA), and 289 to 309 (TTPYSTLLVPIQIKVFIQWIG).

It belongs to the nematode receptor-like protein sra family.

It localises to the membrane. In Caenorhabditis elegans, this protein is Serpentine receptor class alpha-32 (sra-32).